A 105-amino-acid chain; its full sequence is Small ribosomal subunit protein eS24 (105 aa).

It belongs to the eukaryotic ribosomal protein eS24 family.

This chain is Small ribosomal subunit protein eS24, found in Haloquadratum walsbyi (strain DSM 16790 / HBSQ001).